A 94-amino-acid polypeptide reads, in one-letter code: Co-chaperonin GroES (94 aa).

The protein belongs to the GroES chaperonin family. As to quaternary structure, heptamer of 7 subunits arranged in a ring. Interacts with the chaperonin GroEL.

It localises to the cytoplasm. Functionally, together with the chaperonin GroEL, plays an essential role in assisting protein folding. The GroEL-GroES system forms a nano-cage that allows encapsulation of the non-native substrate proteins and provides a physical environment optimized to promote and accelerate protein folding. GroES binds to the apical surface of the GroEL ring, thereby capping the opening of the GroEL channel. The sequence is that of Co-chaperonin GroES from Clostridium perfringens (strain SM101 / Type A).